The primary structure comprises 185 residues: Ribosome-recycling factor (185 aa).

The protein belongs to the RRF family.

It localises to the cytoplasm. Functionally, responsible for the release of ribosomes from messenger RNA at the termination of protein biosynthesis. May increase the efficiency of translation by recycling ribosomes from one round of translation to another. This Shewanella halifaxensis (strain HAW-EB4) protein is Ribosome-recycling factor.